The primary structure comprises 103 residues: Small ribosomal subunit protein uS10c (103 aa).

This sequence belongs to the universal ribosomal protein uS10 family. Part of the 30S ribosomal subunit.

It localises to the plastid. The protein resides in the chloroplast. Its function is as follows. Involved in the binding of tRNA to the ribosomes. The protein is Small ribosomal subunit protein uS10c of Emiliania huxleyi (Coccolithophore).